The chain runs to 330 residues: Tryptophan--tRNA ligase (330 aa).

Residues 10-12 (QPS) and 18-19 (GN) each bind ATP. Residues 11 to 19 (PSGTLTLGN) carry the 'HIGH' region motif. An L-tryptophan-binding site is contributed by Asp133. Residues 145 to 147 (GED), Ile184, and 193 to 197 (KMSKS) each bind ATP. The 'KMSKS' region signature appears at 193 to 197 (KMSKS).

Belongs to the class-I aminoacyl-tRNA synthetase family. In terms of assembly, homodimer.

The protein resides in the cytoplasm. The catalysed reaction is tRNA(Trp) + L-tryptophan + ATP = L-tryptophyl-tRNA(Trp) + AMP + diphosphate + H(+). In terms of biological role, catalyzes the attachment of tryptophan to tRNA(Trp). The protein is Tryptophan--tRNA ligase of Halalkalibacterium halodurans (strain ATCC BAA-125 / DSM 18197 / FERM 7344 / JCM 9153 / C-125) (Bacillus halodurans).